The chain runs to 105 residues: ATP-dependent Clp protease adapter protein ClpS (105 aa).

Positions 1–27 (MVVMSAPTEPKSRPGTTGQRESAPEDV) are disordered.

The protein belongs to the ClpS family. In terms of assembly, binds to the N-terminal domain of the chaperone ClpA.

Its function is as follows. Involved in the modulation of the specificity of the ClpAP-mediated ATP-dependent protein degradation. In Mycolicibacterium paratuberculosis (strain ATCC BAA-968 / K-10) (Mycobacterium paratuberculosis), this protein is ATP-dependent Clp protease adapter protein ClpS.